A 117-amino-acid polypeptide reads, in one-letter code: Large ribosomal subunit protein bL20 (117 aa).

The protein belongs to the bacterial ribosomal protein bL20 family.

Its function is as follows. Binds directly to 23S ribosomal RNA and is necessary for the in vitro assembly process of the 50S ribosomal subunit. It is not involved in the protein synthesizing functions of that subunit. The chain is Large ribosomal subunit protein bL20 from Actinobacillus succinogenes (strain ATCC 55618 / DSM 22257 / CCUG 43843 / 130Z).